The chain runs to 353 residues: Heterogeneous nuclear ribonucleoprotein D0 (353 aa).

The disordered stretch occupies residues 1–89 (MSEEQFGGDG…SSPRHTEAAT (89 aa)). An N-acetylserine modification is found at Ser-2. The span at 11–42 (AAAAATAAVGGSAGEQEGAMVAAAQGAAAAAG) shows a compositional bias: low complexity. Positions 43–56 (SGSGGGSAPGGTEG) are enriched in gly residues. Over residues 62 to 71 (EGAKIDASKN) the composition is skewed to basic and acidic residues. The residue at position 69 (Ser-69) is a Phosphoserine. Lys-70 participates in a covalent cross-link: Glycyl lysine isopeptide (Lys-Gly) (interchain with G-Cter in SUMO2). 3 positions are modified to phosphoserine: Ser-78, Ser-80, and Ser-81. At Thr-89 the chain carries Phosphothreonine. 2 RRM domains span residues 95–177 (WKMF…KTKE) and 180–259 (KKIF…MSKE). An N6-methyllysine modification is found at Lys-117. Phosphothreonine is present on Thr-125. Lys-127 participates in a covalent cross-link: Glycyl lysine isopeptide (Lys-Gly) (interchain with G-Cter in SUMO2). Lys-163 bears the N6-acetyllysine mark. A Phosphoserine modification is found at Ser-188. Thr-191 carries the post-translational modification Phosphothreonine. Residue Lys-195 forms a Glycyl lysine isopeptide (Lys-Gly) (interchain with G-Cter in SUMO2) linkage. N6-acetyllysine is present on residues Lys-241 and Lys-249. Position 269 is a phosphoserine (Ser-269). 4 positions are modified to omega-N-methylarginine: Arg-270, Arg-276, Arg-278, and Arg-280. Residue Arg-343 is modified to Asymmetric dimethylarginine; alternate. Position 343 is a dimethylated arginine; alternate (Arg-343). Arg-343 carries the omega-N-methylarginine; alternate modification.

Identified in a IGF2BP1-dependent mRNP granule complex containing untranslated mRNAs. Part of a complex associated with the FOS mCRD domain and consisting of PABPC1, PAIP1, CSDE1/UNR and SYNCRIP. Interacts with IGF2BP2. Interacts with GTPBP1. Interacts with EIF4G1; the interaction requires RNA. Interacts with EIF3B and RPS3. In terms of processing, methylated by PRMT1, in an insulin-dependent manner. The PRMT1-mediated methylation regulates its phosphorylation. Arg-343 is dimethylated, probably to asymmetric dimethylarginine.

Its subcellular location is the nucleus. It is found in the cytoplasm. Binds with high affinity to RNA molecules that contain AU-rich elements (AREs) found within the 3'-UTR of many proto-oncogenes and cytokine mRNAs. Also binds to double- and single-stranded DNA sequences in a specific manner and functions a transcription factor. Each of the RNA-binding domains specifically can bind solely to a single-stranded non-monotonous 5'-UUAG-3' sequence and also weaker to the single-stranded 5'-TTAGGG-3' telomeric DNA repeat. Binds RNA oligonucleotides with 5'-UUAGGG-3' repeats more tightly than the telomeric single-stranded DNA 5'-TTAGGG-3' repeats. Binding of RRM1 to DNA inhibits the formation of DNA quadruplex structure which may play a role in telomere elongation. May be involved in translationally coupled mRNA turnover. Implicated with other RNA-binding proteins in the cytoplasmic deadenylation/translational and decay interplay of the FOS mRNA mediated by the major coding-region determinant of instability (mCRD) domain. May play a role in the regulation of the rhythmic expression of circadian clock core genes. Directly binds to the 3'UTR of CRY1 mRNA and induces CRY1 rhythmic translation. May also be involved in the regulation of PER2 translation. In Rattus norvegicus (Rat), this protein is Heterogeneous nuclear ribonucleoprotein D0 (Hnrnpd).